The chain runs to 311 residues: Tricarboxylate transport protein, mitochondrial (311 aa).

Positions 1–13 (MPAPRAPRALAAA) are cleaved as a propeptide — removed in mature form. Solcar repeat units follow at residues 23-111 (THPG…LSNH), 122-208 (TRGL…LRNW), and 218-303 (MNPL…VVKL). The next 3 helical transmembrane spans lie at 29-46 (ILAG…TFPT), 86-105 (GLSS…FGMF), and 129-143 (LGAG…VCPM). Ser-156 carries the post-translational modification Phosphoserine. 3 consecutive transmembrane segments (helical) span residues 183–202 (GLTA…FFVM), 224–241 (GVFG…NTPL), and 278–297 (GTVP…FVIY).

This sequence belongs to the mitochondrial carrier (TC 2.A.29) family. Post-translationally, possesses a short cleavable presequence, which, however, is found to be dispensable both for targeting to mitochondria and insertion into the inner membrane. However, the presequence is required to keep SLC25A1 in a soluble state and thus in an import-competent state. Mature SLC25A1 lacking the presequence is prone to aggregation.

Its subcellular location is the mitochondrion inner membrane. The enzyme catalyses (S)-malate(in) + citrate(out) = (S)-malate(out) + citrate(in). It carries out the reaction D-threo-isocitrate(in) + citrate(out) = D-threo-isocitrate(out) + citrate(in). The catalysed reaction is citrate(out) + succinate(in) = citrate(in) + succinate(out). It catalyses the reaction cis-aconitate(in) + citrate(out) = cis-aconitate(out) + citrate(in). The enzyme catalyses trans-aconitate(in) + citrate(out) = trans-aconitate(out) + citrate(in). It carries out the reaction phosphoenolpyruvate(in) + citrate(out) = phosphoenolpyruvate(out) + citrate(in). The catalysed reaction is maleate(in) + citrate(out) = maleate(out) + citrate(in). Functionally, mitochondrial electroneutral antiporter that exports citrate from the mitochondria into the cytosol in exchange for malate. Also able to mediate the exchange of citrate for isocitrate, phosphoenolpyruvate, cis-aconitate and to a lesser extent trans-aconitate, maleate and succinate. In the cytoplasm, citrate plays important roles in fatty acid and sterol synthesis, regulation of glycolysis, protein acetylation, and other physiopathological processes. The chain is Tricarboxylate transport protein, mitochondrial (SLC25A1) from Homo sapiens (Human).